Here is a 418-residue protein sequence, read N- to C-terminus: D-amino acid dehydrogenase 1 (418 aa).

3 to 17 (IMVLGGGVIGVTTAY) is a binding site for FAD.

Belongs to the DadA oxidoreductase family. The cofactor is FAD.

The catalysed reaction is a D-alpha-amino acid + A + H2O = a 2-oxocarboxylate + AH2 + NH4(+). It participates in amino-acid degradation; D-alanine degradation; NH(3) and pyruvate from D-alanine: step 1/1. Oxidative deamination of D-amino acids. The protein is D-amino acid dehydrogenase 1 (dadA1) of Mesorhizobium japonicum (strain LMG 29417 / CECT 9101 / MAFF 303099) (Mesorhizobium loti (strain MAFF 303099)).